Consider the following 178-residue polypeptide: CDP-archaeol synthase (178 aa).

5 consecutive transmembrane segments (helical) span residues 3–23 (IIYLVINSFIFILPAYVANAT), 55–75 (TFFGLFCGTITAILEGIIFNL), 91–111 (GIVGLLLSAGALFGDAIGSFI), 125–145 (ILDQLGFIVFALLFVYPFAPV), and 149–169 (MGIFLLVITPMIHLSANIIAY).

This sequence belongs to the CDP-archaeol synthase family. Mg(2+) serves as cofactor.

It localises to the cell membrane. It catalyses the reaction 2,3-bis-O-(geranylgeranyl)-sn-glycerol 1-phosphate + CTP + H(+) = CDP-2,3-bis-O-(geranylgeranyl)-sn-glycerol + diphosphate. Its pathway is membrane lipid metabolism; glycerophospholipid metabolism. Its function is as follows. Catalyzes the formation of CDP-2,3-bis-(O-geranylgeranyl)-sn-glycerol (CDP-archaeol) from 2,3-bis-(O-geranylgeranyl)-sn-glycerol 1-phosphate (DGGGP) and CTP. This reaction is the third ether-bond-formation step in the biosynthesis of archaeal membrane lipids. This chain is CDP-archaeol synthase, found in Methanococcus aeolicus (strain ATCC BAA-1280 / DSM 17508 / OCM 812 / Nankai-3).